Reading from the N-terminus, the 199-residue chain is 5'-deoxynucleotidase YfbR (199 aa).

Residues 18–19 (RW) and His33 each bind substrate. In terms of domain architecture, HD spans 30 to 142 (VSEHSLQVAM…VKQADALCAY (113 aa)). A divalent metal cation contacts are provided by His33, His68, and Asp69. Substrate-binding positions include Asp69, 77 to 80 (DLPT), and Asp137. Position 137 (Asp137) interacts with a divalent metal cation.

Belongs to the 5DNU family. As to quaternary structure, homodimer. Requires a divalent metal cation as cofactor.

It localises to the cytoplasm. The enzyme catalyses a 2'-deoxyribonucleoside 5'-phosphate + H2O = a 2'-deoxyribonucleoside + phosphate. Functionally, catalyzes the strictly specific dephosphorylation of 2'-deoxyribonucleoside 5'-monophosphates. The sequence is that of 5'-deoxynucleotidase YfbR from Salmonella arizonae (strain ATCC BAA-731 / CDC346-86 / RSK2980).